The following is a 362-amino-acid chain: Zinc transporter 9 (362 aa).

Positions 1-21 are cleaved as a signal peptide; that stretch reads MAFDLKLTACLLLAVFSLAAA. At 22 to 42 the chain is on the extracellular side; it reads ADCECQPSDEGHDAAKSRTLK. A helical membrane pass occupies residues 43 to 63; that stretch reads VIAIFCILVGSSAGCAIPSLG. Residues 64–74 are Cytoplasmic-facing; that stretch reads RRFPALRPDTS. Residues 75–95 traverse the membrane as a helical segment; that stretch reads LFFALKAFAAGVILATAFVHI. Over 96-120 the chain is Extracellular; it reads LPVSFDKLGSPCLVDGPWRKYPFTG. A helical transmembrane segment spans residues 121–141; it reads LVAMLAAVATLLLDTIATGYF. At 142 to 207 the chain is on the cytoplasmic side; that stretch reads LQRAQDSRGA…EDRAKLVRHR (66 aa). The chain crosses the membrane as a helical span at residues 208 to 228; sequence VISQVFELGIIVHSIIIGISL. The Extracellular portion of the chain corresponds to 229-239; it reads GASESPSTIRP. A helical membrane pass occupies residues 240 to 260; it reads LVAALTFHQFFEGIGLGGCIV. Residues 261-269 are Cytoplasmic-facing; that stretch reads QARFHLKSA. Residues 270 to 290 traverse the membrane as a helical segment; sequence VTMAIFFSLTTPVGIMIGIGI. Residues 291 to 301 lie on the Extracellular side of the membrane; it reads SSAYNENSPTA. A helical transmembrane segment spans residues 302-322; that stretch reads LIVEGILDAAAAGILNYMALV. At 323–341 the chain is on the cytoplasmic side; sequence DLLAEDFMNPRVRKSGRLQ. A helical membrane pass occupies residues 342–362; that stretch reads LIISILLLVGIALMSLLGIWA.

This sequence belongs to the ZIP transporter (TC 2.A.5) family.

It is found in the cell membrane. Functionally, zinc transporter that may be involved in zinc uptake from the rhizosphere. This Oryza sativa subsp. japonica (Rice) protein is Zinc transporter 9 (ZIP9).